Consider the following 813-residue polypeptide: Lon protease (813 aa).

One can recognise a Lon N-terminal domain in the interval Leu30–Ile225. Gly376–Thr383 is an ATP binding site. A Lon proteolytic domain is found at Asp612 to Lys793. Active-site residues include Ser699 and Lys742.

It belongs to the peptidase S16 family. As to quaternary structure, homohexamer. Organized in a ring with a central cavity.

The protein localises to the cytoplasm. The enzyme catalyses Hydrolysis of proteins in presence of ATP.. ATP-dependent serine protease that mediates the selective degradation of mutant and abnormal proteins as well as certain short-lived regulatory proteins. Required for cellular homeostasis and for survival from DNA damage and developmental changes induced by stress. Degrades polypeptides processively to yield small peptide fragments that are 5 to 10 amino acids long. Binds to DNA in a double-stranded, site-specific manner. The protein is Lon protease of Cytophaga hutchinsonii (strain ATCC 33406 / DSM 1761 / CIP 103989 / NBRC 15051 / NCIMB 9469 / D465).